A 101-amino-acid polypeptide reads, in one-letter code: Putative RNA-binding protein RbpA (101 aa).

The RRM domain occupies 2 to 79 (SIYVGNLSYD…RDLKVNKAKP (78 aa)). Residues 73–83 (KVNKAKPRENR) are compositionally biased toward basic and acidic residues. The interval 73–101 (KVNKAKPRENRSGGGSFGGGRKSYGGSRY) is disordered. The span at 84 to 101 (SGGGSFGGGRKSYGGSRY) shows a compositional bias: gly residues.

This is Putative RNA-binding protein RbpA (rbpA) from Synechocystis sp. (strain ATCC 27184 / PCC 6803 / Kazusa).